Here is a 158-residue protein sequence, read N- to C-terminus: S-ribosylhomocysteine lyase (158 aa).

Histidine 54, histidine 58, and cysteine 125 together coordinate Fe cation.

It belongs to the LuxS family. As to quaternary structure, homodimer. Requires Fe cation as cofactor.

It catalyses the reaction S-(5-deoxy-D-ribos-5-yl)-L-homocysteine = (S)-4,5-dihydroxypentane-2,3-dione + L-homocysteine. Functionally, involved in the synthesis of autoinducer 2 (AI-2) which is secreted by bacteria and is used to communicate both the cell density and the metabolic potential of the environment. The regulation of gene expression in response to changes in cell density is called quorum sensing. Catalyzes the transformation of S-ribosylhomocysteine (RHC) to homocysteine (HC) and 4,5-dihydroxy-2,3-pentadione (DPD). The protein is S-ribosylhomocysteine lyase of Lactococcus lactis subsp. cremoris (strain MG1363).